The chain runs to 128 residues: KRAB domain-containing protein 1 (128 aa).

Residues 15 to 86 form the KRAB domain; sequence VAFEDVAVYF…QPQGVLSRND (72 aa).

In Homo sapiens (Human), this protein is KRAB domain-containing protein 1 (KRBOX1).